Reading from the N-terminus, the 142-residue chain is FAD synthase (142 aa).

Residues 9-10 (TF), 14-17 (HPGH), and Asp92 contribute to the ATP site.

The protein belongs to the archaeal FAD synthase family. As to quaternary structure, homodimer. A divalent metal cation serves as cofactor.

The catalysed reaction is FMN + ATP + H(+) = FAD + diphosphate. The protein operates within cofactor biosynthesis; FAD biosynthesis; FAD from FMN: step 1/1. Functionally, catalyzes the transfer of the AMP portion of ATP to flavin mononucleotide (FMN) to produce flavin adenine dinucleotide (FAD) coenzyme. The chain is FAD synthase from Halalkalicoccus jeotgali (strain DSM 18796 / CECT 7217 / JCM 14584 / KCTC 4019 / B3).